The primary structure comprises 195 residues: Ribosome maturation factor RimM (195 aa).

Residues 101–191 form the PRC barrel domain; sequence ADEWYPKDLI…YLTLDPPGGL (91 aa).

It belongs to the RimM family. In terms of assembly, binds ribosomal protein uS19.

It is found in the cytoplasm. Its function is as follows. An accessory protein needed during the final step in the assembly of 30S ribosomal subunit, possibly for assembly of the head region. Essential for efficient processing of 16S rRNA. May be needed both before and after RbfA during the maturation of 16S rRNA. It has affinity for free ribosomal 30S subunits but not for 70S ribosomes. This is Ribosome maturation factor RimM from Bifidobacterium adolescentis (strain ATCC 15703 / DSM 20083 / NCTC 11814 / E194a).